A 638-amino-acid chain; its full sequence is 1-deoxy-D-xylulose-5-phosphate synthase (638 aa).

Thiamine diphosphate is bound by residues H81 and 122–124 (GHS). D153 contributes to the Mg(2+) binding site. Thiamine diphosphate is bound by residues 154–155 (GS), N182, Y293, and E377. N182 is a Mg(2+) binding site.

Belongs to the transketolase family. DXPS subfamily. Homodimer. Mg(2+) serves as cofactor. The cofactor is thiamine diphosphate.

It carries out the reaction D-glyceraldehyde 3-phosphate + pyruvate + H(+) = 1-deoxy-D-xylulose 5-phosphate + CO2. It participates in metabolic intermediate biosynthesis; 1-deoxy-D-xylulose 5-phosphate biosynthesis; 1-deoxy-D-xylulose 5-phosphate from D-glyceraldehyde 3-phosphate and pyruvate: step 1/1. Functionally, catalyzes the acyloin condensation reaction between C atoms 2 and 3 of pyruvate and glyceraldehyde 3-phosphate to yield 1-deoxy-D-xylulose-5-phosphate (DXP). The chain is 1-deoxy-D-xylulose-5-phosphate synthase from Oleidesulfovibrio alaskensis (strain ATCC BAA-1058 / DSM 17464 / G20) (Desulfovibrio alaskensis).